A 1178-amino-acid polypeptide reads, in one-letter code: Thrombospondin-2 (1178 aa).

A signal peptide spans 1-22 (MLQRSRLLWLAVFITLWVSSDA). Residues 25-221 (DAKEEENTFD…LQNIHLIFDT (197 aa)) form the Laminin G-like domain. 4 N-linked (GlcNAc...) asparagine glycosylation sites follow: Asn-157, Asn-244, Asn-317, and Asn-322. Positions 324-381 (SVCWQDGRVFADSESWIVDSCTKCTCQDSKIVCHQITCPPVSCADPSFIEGECCPVCS) constitute a VWFC domain. TSP type-1 domains lie at 387-437 (EEGW…KKCD), 443-498 (DGGW…APCP), and 500-555 (NGQW…RDCP). 27 disulfide bridges follow: Cys-399-Cys-431, Cys-403-Cys-436, Cys-414-Cys-421, Cys-455-Cys-492, Cys-459-Cys-497, Cys-470-Cys-482, Cys-512-Cys-549, Cys-516-Cys-554, Cys-527-Cys-539, Cys-559-Cys-570, Cys-564-Cys-580, Cys-583-Cys-594, Cys-600-Cys-616, Cys-607-Cys-625, Cys-628-Cys-652, Cys-658-Cys-671, Cys-665-Cys-684, Cys-686-Cys-697, Cys-713-Cys-721, Cys-726-Cys-746, Cys-762-Cys-782, Cys-785-Cys-805, Cys-821-Cys-841, Cys-844-Cys-864, Cys-882-Cys-902, Cys-918-Cys-938, and Cys-954-Cys-1175. An N-linked (GlcNAc...) asparagine glycan is attached at Asn-463. The EGF-like 1 domain occupies 555–595 (PIDGCLSNPCFPGAECNSYPDGSWSCGPCPAGFLGNGTVCE). A glycan (N-linked (GlcNAc...) asparagine) is linked at Asn-590. The EGF-like 2 domain occupies 654 to 698 (PENPCKDKTHSCHKSAECIYLGHFSDPMYKCECRTGYAGDGRICG). TSP type-3 repeat units lie at residues 699–734 (EDSDLDGWPNNNLVCAANATYHCVKDNCPLLPNSGQ), 735–770 (EDFDKDGKGDACDEDDDNDGVEDDKDNCPLLFNPRQ), 771–793 (FDYDKDEVGDRCDNCPYVHNPAQ), 794–829 (IDTDNNGEGDSCAVDIDGDDIFNERDNCPYVYNTDQ), 830–852 (SDTDGDGVGDQCDNCPLMHNPDQ), 853–890 (TDADNDLVGDQCDNNEDIDEDGHQNNQDNCPYIPNANQ), 891–926 (ADHDKDGKGDACDPDDDNDGIPDDRDNCRLRYNPEQ), and 927–962 (EDSDGDGRGDICKDDFDDDNVPDIFDVCPENNAISE). Asn-716 carries an N-linked (GlcNAc...) asparagine glycan. The interval 737 to 760 (FDKDGKGDACDEDDDNDGVEDDKD) is disordered. The span at 746–759 (CDEDDDNDGVEDDK) shows a compositional bias: acidic residues. A disordered region spans residues 852–941 (QTDADNDLVG…DGRGDICKDD (90 aa)). A compositionally biased stretch (acidic residues) spans 853-872 (TDADNDLVGDQCDNNEDIDE). Positions 891 to 901 (ADHDKDGKGDA) are enriched in basic and acidic residues. Residues 902 to 911 (CDPDDDNDGI) are compositionally biased toward acidic residues. Composition is skewed to basic and acidic residues over residues 912 to 924 (PDDRDNCRLRYNP) and 931 to 940 (GDGRGDICKD). A Cell attachment site motif is present at residues 934–936 (RGD). Residues 966–1178 (RKFQMVPLDP…SDLKYECRDA (213 aa)) form the TSP C-terminal domain. Asn-1075 carries N-linked (GlcNAc...) asparagine glycosylation.

This sequence belongs to the thrombospondin family. As to quaternary structure, homotrimer; disulfide-linked. Can bind to fibrinogen, fibronectin, laminin and type V collagen.

Its function is as follows. Adhesive glycoprotein that mediates cell-to-cell and cell-to-matrix interactions. The polypeptide is Thrombospondin-2 (THBS2) (Gallus gallus (Chicken)).